The primary structure comprises 61 residues: Photosystem II reaction center protein K (61 aa).

The propeptide occupies 1–24 (MLNIFSLIWICLNSALYSSGFFFG). The helical transmembrane segment at 36 to 56 (IIDFMPVIPVFFFLLAFVWQA) threads the bilayer.

Belongs to the PsbK family. PSII is composed of 1 copy each of membrane proteins PsbA, PsbB, PsbC, PsbD, PsbE, PsbF, PsbH, PsbI, PsbJ, PsbK, PsbL, PsbM, PsbT, PsbX, PsbY, PsbZ, Psb30/Ycf12, at least 3 peripheral proteins of the oxygen-evolving complex and a large number of cofactors. It forms dimeric complexes.

It localises to the plastid. The protein localises to the chloroplast thylakoid membrane. Its function is as follows. One of the components of the core complex of photosystem II (PSII). PSII is a light-driven water:plastoquinone oxidoreductase that uses light energy to abstract electrons from H(2)O, generating O(2) and a proton gradient subsequently used for ATP formation. It consists of a core antenna complex that captures photons, and an electron transfer chain that converts photonic excitation into a charge separation. This chain is Photosystem II reaction center protein K, found in Coffea arabica (Arabian coffee).